The sequence spans 125 residues: Small ribosomal subunit protein uS13 (125 aa).

This sequence belongs to the universal ribosomal protein uS13 family. In terms of assembly, part of the 30S ribosomal subunit. Forms a loose heterodimer with protein S19. Forms two bridges to the 50S subunit in the 70S ribosome.

Functionally, located at the top of the head of the 30S subunit, it contacts several helices of the 16S rRNA. In the 70S ribosome it contacts the 23S rRNA (bridge B1a) and protein L5 of the 50S subunit (bridge B1b), connecting the 2 subunits; these bridges are implicated in subunit movement. Contacts the tRNAs in the A and P-sites. This is Small ribosomal subunit protein uS13 from Rickettsia bellii (strain OSU 85-389).